The primary structure comprises 357 residues: LINE-1 retrotransposable element ORF1 protein (357 aa).

The tract at residues 1 to 40 is disordered; that stretch reads MAKGKRKNPTNRNQDHSPSSERSTPTPPSPGHPNTTENLD. Positions 59–156 form a coiled coil; it reads HKSLKDLQES…IENIDTTVKE (98 aa). The RNA recognition motif (RRM) domain stretch occupies residues 179 to 274; that stretch reads NLRIIGIDEN…KGRPIRITPD (96 aa). The interval 278–339 is C-terminal domain (CTD); that stretch reads ETMKARRAWT…STNPALQRII (62 aa).

The protein belongs to the transposase 22 family. Homotrimer (via coiled coil domain). May also form larger homooligomers. Interacts with Tex19.1 and UBR2. Interacts with MOV10. Polyubiquitinated, probably by UBR2, which induces its degradation. In terms of tissue distribution, expressed in meiotic spermatocytes and in the cerebellum (at protein level).

The protein localises to the nucleus. The protein resides in the nucleolus. It is found in the cytoplasm. Its subcellular location is the cytoplasmic ribonucleoprotein granule. It localises to the stress granule. Its function is as follows. Nucleic acid-binding protein which is essential for retrotransposition of LINE-1 elements in the genome. Functions as a nucleic acid chaperone binding its own transcript and therefore preferentially mobilizing the transcript from which they are encoded. The polypeptide is LINE-1 retrotransposable element ORF1 protein (Mus musculus (Mouse)).